We begin with the raw amino-acid sequence, 534 residues long: Peptide chain release factor 3 (534 aa).

One can recognise a tr-type G domain in the interval 9-278 (ARRRTFAIIS…FFVEHAPPPQ (270 aa)). GTP contacts are provided by residues 18–25 (SHPDAGKT), 86–90 (DTPGH), and 140–143 (NKLD).

It belongs to the TRAFAC class translation factor GTPase superfamily. Classic translation factor GTPase family. PrfC subfamily.

It is found in the cytoplasm. Increases the formation of ribosomal termination complexes and stimulates activities of RF-1 and RF-2. It binds guanine nucleotides and has strong preference for UGA stop codons. It may interact directly with the ribosome. The stimulation of RF-1 and RF-2 is significantly reduced by GTP and GDP, but not by GMP. The sequence is that of Peptide chain release factor 3 from Xanthomonas euvesicatoria pv. vesicatoria (strain 85-10) (Xanthomonas campestris pv. vesicatoria).